The following is a 77-amino-acid chain: U-actitoxin-Avd12a (77 aa).

A signal peptide spans 1–23; sequence MALFRMLFLCAVLVLLTSKEGMS. Positions 24–29 are excised as a propeptide; that stretch reads YEEPEN. The EGF-like domain maps to 31–73; that stretch reads EGVACTGQYAESFCLNGGTCRYIQSIGEYYCICNGDYTGHRCE. Cystine bridges form between Cys35-Cys50, Cys44-Cys61, and Cys63-Cys72.

It belongs to the EGF domain peptide family.

It is found in the secreted. It localises to the nematocyst. Functionally, has both toxic and EGF activity. Its EGF activity consists of rounding cells (morphological change) and inducing tyrosine phosphorylation of the EGFR in A431 cells, but with a lower potency that human EGF. The sequence is that of U-actitoxin-Avd12a from Anemonia viridis (Snakelocks anemone).